Here is a 136-residue protein sequence, read N- to C-terminus: Large ribosomal subunit protein uL16c (136 aa).

Belongs to the universal ribosomal protein uL16 family. Part of the 50S ribosomal subunit.

Its subcellular location is the plastid. It is found in the chloroplast. The polypeptide is Large ribosomal subunit protein uL16c (Chlamydomonas reinhardtii (Chlamydomonas smithii)).